A 146-amino-acid chain; its full sequence is Universal stress protein MTH_1154 (146 aa).

Belongs to the universal stress protein A family.

This is Universal stress protein MTH_1154 from Methanothermobacter thermautotrophicus (strain ATCC 29096 / DSM 1053 / JCM 10044 / NBRC 100330 / Delta H) (Methanobacterium thermoautotrophicum).